The primary structure comprises 166 residues: Succinate dehydrogenase assembly factor 2, mitochondrial (166 aa).

The transit peptide at 1 to 29 directs the protein to the mitochondrion; the sequence is MAVVAVFPALARMLAVSRRRLVSPSLSMT.

This sequence belongs to the SDHAF2 family. In terms of assembly, interacts with SDHA within the SDH catalytic dimer.

Its subcellular location is the mitochondrion matrix. In terms of biological role, plays an essential role in the assembly of succinate dehydrogenase (SDH), an enzyme complex (also referred to as respiratory complex II) that is a component of both the tricarboxylic acid (TCA) cycle and the mitochondrial electron transport chain, and which couples the oxidation of succinate to fumarate with the reduction of ubiquinone (coenzyme Q) to ubiquinol. Required for flavinylation (covalent attachment of FAD) of the flavoprotein subunit SDHA of the SDH catalytic dimer. This is Succinate dehydrogenase assembly factor 2, mitochondrial from Bos taurus (Bovine).